Consider the following 77-residue polypeptide: Large ribosomal subunit protein uL29 (77 aa).

This sequence belongs to the universal ribosomal protein uL29 family.

The polypeptide is Large ribosomal subunit protein uL29 (Methanopyrus kandleri (strain AV19 / DSM 6324 / JCM 9639 / NBRC 100938)).